Reading from the N-terminus, the 433-residue chain is Protein translocase subunit SecY (433 aa).

Helical transmembrane passes span 17-37 (IIFTIFMLIICRIGSFIPIPG), 71-91 (IFALAIMPYITASIIIQLMSV), 117-137 (LTVLLASFQAYGVALSLESMV), 141-161 (GPVVILAGFFFRVTTVITLVV), 184-204 (LIIFIGIISGVPSAIISMFEL), 212-232 (PLIAITVCIGVVLLIAIIIFF), 268-288 (GVIPPIFASSILLFPTTLANF), 310-330 (YILLYVVLIMFFSFFYTAIVF), 366-386 (LTVIGGLYLSIICVIPELLMN), and 388-408 (YVISLSLGGTSFLIVVNVVLD).

Belongs to the SecY/SEC61-alpha family. As to quaternary structure, component of the Sec protein translocase complex. Heterotrimer consisting of SecY, SecE and SecG subunits. The heterotrimers can form oligomers, although 1 heterotrimer is thought to be able to translocate proteins. Interacts with the ribosome. Interacts with SecDF, and other proteins may be involved. Interacts with SecA.

It localises to the cell inner membrane. Functionally, the central subunit of the protein translocation channel SecYEG. Consists of two halves formed by TMs 1-5 and 6-10. These two domains form a lateral gate at the front which open onto the bilayer between TMs 2 and 7, and are clamped together by SecE at the back. The channel is closed by both a pore ring composed of hydrophobic SecY resides and a short helix (helix 2A) on the extracellular side of the membrane which forms a plug. The plug probably moves laterally to allow the channel to open. The ring and the pore may move independently. In Rickettsia typhi (strain ATCC VR-144 / Wilmington), this protein is Protein translocase subunit SecY.